The sequence spans 382 residues: Histone acetyltransferase type B subunit 2 (382 aa).

WD repeat units lie at residues 98–138 (ENNA…RYSH), 141–181 (PHTK…TTFK), 184–224 (IQKD…VVSQ), 228–268 (ESSN…ENSG), and 275–315 (GHSE…EEQQ). An interaction with the histone H4 N-terminus region spans residues 317–321 (EDAED). Residues 332-372 (GHTAGVSDLSWCPFKDWMIGSVADDNIVHLWEISKKLITNE) form a WD 6 repeat.

Belongs to the WD repeat RBAP46/RBAP48/MSI1 family. As to quaternary structure, component of the HAT-B complex composed of at least HAT1 and HAT2. The HAT-B complex binds to histone H4 tail.

It localises to the cytoplasm. The protein resides in the nucleus. Regulatory subunit of the histone acetylase B (HAT-B) complex. The complex acetylates 'Lys-14' of histone H4 which is required for telomeric silencing. The protein is Histone acetyltransferase type B subunit 2 (HAT2) of Candida albicans (strain SC5314 / ATCC MYA-2876) (Yeast).